The chain runs to 430 residues: MGYEDEFPESLELFKRAERVMPGGVSSPVRRFDPYPFYVERAEGSRLYTVDGHVLIDYCLAFGPLILGHAHPEVVEAVVERVREGFHYGTPTLPELKLAEKVVELVPNVEKVRLVNTGTEATMSAIRLARAYTGREKIVKFEGCYHGAHDAVLVRAGSGASELGAPDSPGIPESVAENTLVCPFNDVEAFVETVERFDEEIGAVIVEPVLGNAGCVPPDEEFLKVLREYCDGTERLLIFDEVITGFRLELGGAQEYYGIDADLVCLGKILGGGLPIGAFGGPEEYMSRVAPEGKVYQAGTFNGNPVSATAGLVTLEVLERERPYDELSSKAERLASALEDGLEDRGIEGVVNRVESMFQVYFGIEEVRDYADVNSADHDAFKRFHRELLEHGVWIAASNYEAWFLSIAHTETDLERTEEAFEEALDRLTG.

Position 268 is an N6-(pyridoxal phosphate)lysine (Lys-268).

The protein belongs to the class-III pyridoxal-phosphate-dependent aminotransferase family. HemL subfamily. Requires pyridoxal 5'-phosphate as cofactor.

The protein localises to the cytoplasm. The enzyme catalyses (S)-4-amino-5-oxopentanoate = 5-aminolevulinate. It participates in porphyrin-containing compound metabolism; protoporphyrin-IX biosynthesis; 5-aminolevulinate from L-glutamyl-tRNA(Glu): step 2/2. The chain is Glutamate-1-semialdehyde 2,1-aminomutase from Methanopyrus kandleri (strain AV19 / DSM 6324 / JCM 9639 / NBRC 100938).